The sequence spans 268 residues: Cytochrome c oxidase subunit 3 (268 aa).

7 helical membrane passes run 19–39 (PWPI…VLTM), 49–69 (FDLG…DIVI), 85–105 (LIIG…SVFW), 124–144 (PVGI…IILL), 165–185 (SIIG…FQAF), 202–222 (VFFA…LFLF), and 245–265 (ILYW…VYFW).

It belongs to the cytochrome c oxidase subunit 3 family. Component of the cytochrome c oxidase (complex IV, CIV), a multisubunit enzyme composed of a catalytic core of 3 subunits and several supernumerary subunits. The complex exists as a monomer or a dimer and forms supercomplexes (SCs) in the inner mitochondrial membrane with ubiquinol-cytochrome c oxidoreductase (cytochrome b-c1 complex, complex III, CIII).

The protein resides in the mitochondrion inner membrane. It carries out the reaction 4 Fe(II)-[cytochrome c] + O2 + 8 H(+)(in) = 4 Fe(III)-[cytochrome c] + 2 H2O + 4 H(+)(out). Functionally, component of the cytochrome c oxidase, the last enzyme in the mitochondrial electron transport chain which drives oxidative phosphorylation. The respiratory chain contains 3 multisubunit complexes succinate dehydrogenase (complex II, CII), ubiquinol-cytochrome c oxidoreductase (cytochrome b-c1 complex, complex III, CIII) and cytochrome c oxidase (complex IV, CIV), that cooperate to transfer electrons derived from NADH and succinate to molecular oxygen, creating an electrochemical gradient over the inner membrane that drives transmembrane transport and the ATP synthase. Cytochrome c oxidase is the component of the respiratory chain that catalyzes the reduction of oxygen to water. Electrons originating from reduced cytochrome c in the intermembrane space (IMS) are transferred via the dinuclear copper A center (CU(A)) of subunit 2 and heme A of subunit 1 to the active site in subunit 1, a binuclear center (BNC) formed by heme A3 and copper B (CU(B)). The BNC reduces molecular oxygen to 2 water molecules using 4 electrons from cytochrome c in the IMS and 4 protons from the mitochondrial matrix. The chain is Cytochrome c oxidase subunit 3 (COIII) from Schizophyllum commune (Split gill fungus).